The chain runs to 368 residues: tRNA-specific 2-thiouridylase MnmA (368 aa).

ATP is bound by residues 12–19 and Met-38; that span reads GMSGGVDS. An interaction with target base in tRNA region spans residues 98 to 100; it reads NPD. Residue Cys-103 is the Nucleophile of the active site. Residues Cys-103 and Cys-200 are joined by a disulfide bond. Position 128 (Gly-128) interacts with ATP. An interaction with tRNA region spans residues 150–152; it reads KDQ. Cys-200 acts as the Cysteine persulfide intermediate in catalysis. The segment at 313–314 is interaction with tRNA; it reads RY.

This sequence belongs to the MnmA/TRMU family. Interacts with TusE.

The protein resides in the cytoplasm. It carries out the reaction S-sulfanyl-L-cysteinyl-[protein] + uridine(34) in tRNA + AH2 + ATP = 2-thiouridine(34) in tRNA + L-cysteinyl-[protein] + A + AMP + diphosphate + H(+). Functionally, catalyzes the 2-thiolation of uridine at the wobble position (U34) of tRNA(Lys), tRNA(Glu) and tRNA(Gln), leading to the formation of s(2)U34, the first step of tRNA-mnm(5)s(2)U34 synthesis. Sulfur is provided by IscS, via a sulfur-relay system. Binds ATP and its substrate tRNAs. The sequence is that of tRNA-specific 2-thiouridylase MnmA from Pectobacterium carotovorum subsp. carotovorum (strain PC1).